The chain runs to 684 residues: Agnestins biosynthesis cluster transcription factor AgnL11 (684 aa).

The segment at residues 25–51 (CHFCRTKKLKCDRRFPCSNCRARRLSC) is a DNA-binding region (zn(2)-C6 fungal-type). The stretch at 76 to 103 (NEELSENINELKARLQRLEELISVNAEE) forms a coiled coil. Residues 601 to 644 (KGSASARKDKNPIHGDTDRATPPGSSNLPQHDKSSSSSPAPPVW) are disordered. Residues 606–619 (ARKDKNPIHGDTDR) are compositionally biased toward basic and acidic residues.

The protein localises to the nucleus. Its function is as follows. Transcription factor that regulates the expression of the gene cluster that mediates the biosynthesis of agnestins, dihydroxy-xanthone metabolites. The protein is Agnestins biosynthesis cluster transcription factor AgnL11 of Paecilomyces divaricatus (Penicillium divaricatum).